Here is a 509-residue protein sequence, read N- to C-terminus: L-arabinose isomerase (509 aa).

Positions 313, 340, 357, and 456 each coordinate Mn(2+).

Belongs to the arabinose isomerase family. Mn(2+) is required as a cofactor.

The catalysed reaction is beta-L-arabinopyranose = L-ribulose. The protein operates within carbohydrate degradation; L-arabinose degradation via L-ribulose; D-xylulose 5-phosphate from L-arabinose (bacterial route): step 1/3. Functionally, catalyzes the conversion of L-arabinose to L-ribulose. The sequence is that of L-arabinose isomerase from Bacteroides thetaiotaomicron (strain ATCC 29148 / DSM 2079 / JCM 5827 / CCUG 10774 / NCTC 10582 / VPI-5482 / E50).